Consider the following 496-residue polypeptide: Genome polyprotein (496 aa).

Topologically, residues 1 to 447 (SRCTHLENRD…HTVLGGAFNS (447 aa)) are extracellular. 6 disulfide bridges follow: cysteine 3–cysteine 30, cysteine 60–cysteine 116, cysteine 60–cysteine 121, cysteine 74–cysteine 105, cysteine 92–cysteine 116, and cysteine 92–cysteine 121. The tract at residues 98–111 (DRGWGNHCGLFGKG) is fusion peptide. N-linked (GlcNAc...) asparagine; by host glycosylation is present at asparagine 154. Disulfide bonds link cysteine 186/cysteine 290 and cysteine 307/cysteine 338. The chain crosses the membrane as a helical span at residues 448–468 (IFGGVGFLPKLLMGVALAWLG). Residues 469-479 (LNTRNPTMSMS) lie on the Cytoplasmic side of the membrane. A helical transmembrane segment spans residues 480-496 (FLMAGGLVLAMTLGVGA).

Homodimer; in the endoplasmic reticulum and Golgi. Post-translationally, N-glycosylated.

It is found in the virion membrane. Its subcellular location is the host endoplasmic reticulum membrane. Functionally, binds to host cell surface receptor and mediates fusion between viral and cellular membranes. Envelope protein is synthesized in the endoplasmic reticulum in the form of heterodimer with protein prM. They play a role in virion budding in the ER, and the newly formed immature particle is covered with 60 spikes composed of heterodimer between precursor prM and envelope protein E. The virion is transported to the Golgi apparatus where the low pH causes dissociation of PrM-E heterodimers and formation of E homodimers. prM-E cleavage is ineficient, and many virions are only partially matured. These uncleaved prM would play a role in immune evasion. This chain is Genome polyprotein, found in Bos taurus (Bovine).